Consider the following 640-residue polypeptide: Threonine--tRNA ligase (640 aa).

Residues 1–61 (MPTITLPDGS…ERDASLQIIT (61 aa)) enclose the TGS domain. The tract at residues 242 to 533 (DHRRIGKQLD…LIEHYAGAFP (292 aa)) is catalytic. The Zn(2+) site is built by Cys-333, His-384, and His-510.

It belongs to the class-II aminoacyl-tRNA synthetase family. In terms of assembly, homodimer. Requires Zn(2+) as cofactor.

It localises to the cytoplasm. The catalysed reaction is tRNA(Thr) + L-threonine + ATP = L-threonyl-tRNA(Thr) + AMP + diphosphate + H(+). Functionally, catalyzes the attachment of threonine to tRNA(Thr) in a two-step reaction: L-threonine is first activated by ATP to form Thr-AMP and then transferred to the acceptor end of tRNA(Thr). Also edits incorrectly charged L-seryl-tRNA(Thr). The polypeptide is Threonine--tRNA ligase (Stutzerimonas stutzeri (strain A1501) (Pseudomonas stutzeri)).